The chain runs to 450 residues: MDLLTTTSTVAVACYALLSTVYKGMQAVYSLPPTVAPASEDLVGSDLWPSVDVIIPCYNEGPLTLSACLDSIANQEYAGKLRVYVVDDGSGNRDAVIPIHDNYAGDPRFDFILLPENVGKRKAQIAAIRRSSGDLVLNVDSDTTLASDVIRKLARKMQDPAIGAAMGQLTASNRSDTWLTRLIDMEYWLACNEERAAQARFGAVMCCCGPCAMYRRSSLLSLLDQYETQMFRGKPSDFGEDRHLTILMLEAGFRTEYVPDAIAVTVVPDRLGPYLRQQLRWARSTFRDTLLALRLLPGLDRYLTLDVVGQNLGPLLLALSVIAGIAQFALTATLPWPTILVIAAMTIIRCTVTACRARQARFIGFSLHTFINIFLLLPLKAYALCTLSNSDWLSRKTATLPNADKKQIIVANPIAGVGTGSSGSAEAIRRTDLPRDSSKLVNADSVCSAE.

Belongs to the NodC/HAS family.

Its subcellular location is the cell membrane. Involved in the synthesis of Nod factor, a sulfated N-acyl-beta-1,4-tetrasaccharide of N-acetylglucosamine which initiates a series of events in the host plant species leading eventually to nodulation. The protein is N-acetylglucosaminyltransferase (nodC) of Rhizobium sp. (strain N33).